The following is a 78-amino-acid chain: Large ribosomal subunit protein bL28 (78 aa).

Positions 1–33 are disordered; it reads MARKDDVTGEGPVTGNSVSDSNQKTNRRFKRNL. The segment covering 14 to 24 has biased composition (polar residues); sequence TGNSVSDSNQK.

It belongs to the bacterial ribosomal protein bL28 family.

This Salinibacter ruber (strain DSM 13855 / M31) protein is Large ribosomal subunit protein bL28.